We begin with the raw amino-acid sequence, 984 residues long: Detocs histidine-protein kinase DtcA (984 aa).

Histidine 645 carries the post-translational modification Phosphohistidine; by autocatalysis.

In terms of processing, autophosphorylated.

It carries out the reaction ATP + protein L-histidine = ADP + protein N-phospho-L-histidine.. Its function is as follows. Sensor-kinase member of the two-component regulatory system Detocs that confers resistance to bacteriophage. When the system (DtcA-DtcB-DtcC) is expressed in a susceptible E.coli (strain MG1655) it confers resistance to bacteriophages T2, T4, T5, T6 and SECphi27. Detocs inhibits T5 infection leading to growth arrest but not complete cell lysis, during SECphi27 infection leads to cell lysis. DtcA (this subunit) probably autophosphorylates upon sensing viral infection, and subsequently transfers the phosphate signal to DtcC which activates it, leading to an antiviral defense; DtcB may scavenge phosphorylation signals from accidental activation of DtcA. The polypeptide is Detocs histidine-protein kinase DtcA (Vibrio alginolyticus).